Reading from the N-terminus, the 314-residue chain is O-antigen chain rhamnosyltransferase RfbN (314 aa).

It belongs to the glycosyltransferase 2 family.

It catalyses the reaction alpha-D-galactosyl-di-trans,octa-cis-undecaprenyl diphosphate + dTDP-beta-L-rhamnose = alpha-L-rhamnosyl-(1-&gt;3)-alpha-D-galactosyl-1-diphospho-di-trans,octa-cis-undecaprenol + dTDP + H(+). It functions in the pathway bacterial outer membrane biogenesis; LPS O-antigen biosynthesis. Rhamnosyltransferase involved in the biosynthesis of the repeat unit of the lipopolysaccharide (LPS) O-antigen region. Catalyzes the addition of a rhamnose to the galactosyl-undecaprenyl diphosphate intermediate. This is O-antigen chain rhamnosyltransferase RfbN from Salmonella typhimurium (strain LT2 / SGSC1412 / ATCC 700720).